The following is a 97-amino-acid chain: C-C motif chemokine 7 (97 aa).

Residues 1–23 (MQISAALLCVLLTAAAFTVHVWA) form the signal peptide. Gln24 carries the pyrrolidone carboxylic acid modification. Asn29 carries an N-linked (GlcNAc...) asparagine glycan. 2 disulfides stabilise this stretch: Cys33-Cys57 and Cys34-Cys73.

This sequence belongs to the intercrine beta (chemokine CC) family. In terms of assembly, monomer. Interacts with TNFAIP6 (via Link domain).

It is found in the secreted. Functionally, chemotactic factor that attracts monocytes and eosinophils, but not neutrophils. Augments monocyte anti-tumor activity. The chain is C-C motif chemokine 7 (Ccl7) from Rattus norvegicus (Rat).